We begin with the raw amino-acid sequence, 285 residues long: Cytochrome c1 (285 aa).

Residues 1 to 22 (MIRKLTLTAATALALSGGAAMA) form the signal peptide. Heme c is bound by residues cysteine 58, cysteine 61, histidine 62, and methionine 207. A helical membrane pass occupies residues 251 to 269 (AGFTAVMFLTVLSVLLYLT).

The main subunits of complex b-c1 are: cytochrome b, cytochrome c1 and the Rieske protein. In terms of processing, binds 1 heme c group covalently per subunit.

It localises to the cell membrane. Its function is as follows. Component of the ubiquinol-cytochrome c reductase complex (complex III or cytochrome b-c1 complex), which is a respiratory chain that generates an electrochemical potential coupled to ATP synthesis. c1 functions as an electron donor to cytochrome c. This is Cytochrome c1 (petC) from Cereibacter sphaeroides (Rhodobacter sphaeroides).